Here is a 495-residue protein sequence, read N- to C-terminus: MSFEIIAKDLAGRVGKLYTKSGVIETPALFPVVDPRKQELPSAVIERYFGQIITNAYFVYRLTGGRAVDIKKVLSWNAVLMTDSGAYQILRYGSVEVDPDEILQFQARIGSDIGVILDLPFDYEEPYESALLKVEETIRRAKRASAMLDKLEDMLVVGPIQGGLYLDLLATSAREISKLGFHIFAVGSPTTLLEEYRFDLLLEVILHVKANILREAPLHLFGAGHPLVLPFAVALGVDLFDSASYILYARDDRIMLRDRTLRLEDVKTDYLPCSTKLCHKPVKELREMPHEERIQLIAEHNLAILREELLEIKQRIHEGTLWEYLEIKARAHPTLYRFLRSLGRYKRLIEEYDPETHPETHGLFFYQDTAESRPEPHRHWSRTANLYTPSKVAIVIRAGEKPYNKSWEYRYLKSLVGDRAHVLFYDPVFGLVPEEVAEIYPLSQNEAEGESEAARAFAYEWLNNYDVILLYRVDLPMLSKKVIPLRSLDDVLHYI.

Residue D83 is the Nucleophile of the active site. Position 118 (D118) interacts with substrate. Zn(2+) contacts are provided by C273 and C278.

Belongs to the archaeosine tRNA-ribosyltransferase family. It depends on Zn(2+) as a cofactor.

It catalyses the reaction guanosine(15) in tRNA + 7-cyano-7-deazaguanine = 7-cyano-7-carbaguanosine(15) in tRNA + guanine. It participates in tRNA modification; archaeosine-tRNA biosynthesis. Its function is as follows. Exchanges the guanine residue with 7-cyano-7-deazaguanine (preQ0) at position 15 in the dihydrouridine loop (D-loop) of archaeal tRNAs. The polypeptide is tRNA-guanine(15) transglycosylase (Pyrobaculum aerophilum (strain ATCC 51768 / DSM 7523 / JCM 9630 / CIP 104966 / NBRC 100827 / IM2)).